We begin with the raw amino-acid sequence, 1023 residues long: GATOR2 complex protein WDR24 (1023 aa).

WD repeat units lie at residues 16-54, 64-108, 114-154, 159-199, 203-243, 245-287, and 291-329; these read NLGSPLSAISSSPDSTKLIVAGRDIVKIVSVQNNEFKVT, SLNY…SKSV, DHSR…NASK, PKSE…IAVE, SHQG…SLNN, STIS…IPLF, and DHRDVPTGLIWKSPSSLISCSKDSHLLLNEFQDSYKPYQ. A compositionally biased stretch (low complexity) spans 563–578; sequence SKNIIDNSNDSNQEIN. 2 disordered regions span residues 563-621 and 661-824; these read SKNI…EPPS and QKST…SIEN. Acidic residues predominate over residues 584–593; sequence KEDEEEDDDN. Residues 661–681 show a composition bias toward polar residues; that stretch reads QKSTDNISDNNSNVHVNIKRQ. Over residues 682–695 the composition is skewed to low complexity; the sequence is NQPTNNNNNNSNID. Over residues 696–742 the composition is skewed to basic and acidic residues; sequence NLEKKSNKSKSTKENKESSLTDQNKQKRNDNKEKIDNNEIDNDNKDN. Acidic residues predominate over residues 743–759; the sequence is NDDDDNDVDNIGEDNDE. The span at 760–812 shows a compositional bias: low complexity; it reads INNNNDNNNNNNNNNNNNNNNNNNNNNNNNNNNNNNNNKNNNNDNNNNNNINN. A C4-type zinc finger spans residues 947-969; sequence ACSSCGKSIPQNSIICEKCNKAS. Residues Cys-948, Cys-951, Cys-962, Cys-965, Cys-972, Cys-975, Cys-986, Cys-989, His-991, His-994, His-997, Cys-1010, Cys-1014, His-1016, and Cys-1018 each coordinate Zn(2+). The RING-type; atypical zinc finger occupies 970–1021; sequence SKCSICRLPVKGMWVWCQGCGHGGHLEHMKSWFIDKNQKSCPTGCTHICTPF.

Belongs to the WD repeat WDR24 family. In terms of assembly, probably part of the GATOR complex.

Its subcellular location is the lysosome membrane. The enzyme catalyses S-ubiquitinyl-[E2 ubiquitin-conjugating enzyme]-L-cysteine + [acceptor protein]-L-lysine = [E2 ubiquitin-conjugating enzyme]-L-cysteine + N(6)-ubiquitinyl-[acceptor protein]-L-lysine.. It functions in the pathway protein modification; protein ubiquitination. Functionally, as a component of the GATOR complex may function in the amino acid-sensing branch of the TORC1 signaling pathway. The chain is GATOR2 complex protein WDR24 from Dictyostelium discoideum (Social amoeba).